A 107-amino-acid polypeptide reads, in one-letter code: Anti-adapter protein IraM (107 aa).

This sequence belongs to the IraM/RssC family.

It is found in the cytoplasm. Functionally, inhibits RpoS proteolysis by regulating RssB activity, thereby increasing the stability of the sigma stress factor RpoS during magnesium starvation. The sequence is that of Anti-adapter protein IraM from Escherichia coli (strain K12 / MC4100 / BW2952).